The chain runs to 63 residues: Cecropin-C (63 aa).

An N-terminal signal peptide occupies residues 1-23 (MNFNKIFVFVALILAISLGQSEA). An Arginine amide modification is found at Arg-62.

Belongs to the cecropin family.

Its subcellular location is the secreted. Cecropins have lytic and antibacterial activity against several Gram-positive and Gram-negative bacteria. The protein is Cecropin-C (CecC) of Drosophila orena (Fruit fly).